The following is a 164-amino-acid chain: Protein SprT (164 aa).

The region spanning 13-156 (YQQAEAFFKR…LCRRCREPLV (144 aa)) is the SprT-like domain. Histidine 69 serves as a coordination point for Zn(2+). Residue glutamate 70 is part of the active site. Position 73 (histidine 73) interacts with Zn(2+).

The protein belongs to the SprT family. It depends on Zn(2+) as a cofactor.

The protein localises to the cytoplasm. The protein is Protein SprT of Pseudomonas syringae pv. syringae (strain B728a).